The chain runs to 306 residues: Ribonuclease Z (306 aa).

Residues histidine 63, histidine 65, aspartate 67, histidine 68, histidine 141, aspartate 208, and histidine 266 each coordinate Zn(2+). Aspartate 67 serves as the catalytic Proton acceptor.

The protein belongs to the RNase Z family. As to quaternary structure, homodimer. The cofactor is Zn(2+).

It carries out the reaction Endonucleolytic cleavage of RNA, removing extra 3' nucleotides from tRNA precursor, generating 3' termini of tRNAs. A 3'-hydroxy group is left at the tRNA terminus and a 5'-phosphoryl group is left at the trailer molecule.. In terms of biological role, zinc phosphodiesterase, which displays some tRNA 3'-processing endonuclease activity. Probably involved in tRNA maturation, by removing a 3'-trailer from precursor tRNA. This chain is Ribonuclease Z, found in Protochlamydia amoebophila (strain UWE25).